A 668-amino-acid polypeptide reads, in one-letter code: Probable metal-nicotianamine transporter YSL5 (668 aa).

Over residues 1 to 11 (MPPPETSSAAA) the composition is skewed to low complexity. A disordered region spans residues 1-22 (MPPPETSSAAAPSPPSPDPLPP). The segment covering 12-22 (PSPPSPDPLPP) has biased composition (pro residues). Helical transmembrane passes span 27–47 (LTLR…VVIH), 51–71 (LTVG…FFLA), 102–122 (CAIA…IFAM), 147–167 (LGWM…SIVM), 209–229 (LVKY…FSGV), 268–288 (IVNC…WPFI), 315–335 (IAIS…FLII), 383–403 (LAVS…PIIF), 410–430 (LVLV…YGMG), 443–463 (IALF…AGLA), 501–521 (IGVA…WTAF), 557–577 (LEIC…KDVV), 595–615 (FYIG…LFAW), and 633–653 (GLIC…ILGV).

Belongs to the YSL (TC 2.A.67.2) family. Expressed in roots.

Its subcellular location is the membrane. In terms of biological role, may be involved in the transport of nicotianamine-chelated metals. This Oryza sativa subsp. japonica (Rice) protein is Probable metal-nicotianamine transporter YSL5 (YSL5).